The primary structure comprises 523 residues: Flavin-dependent halogenase armH5 (523 aa).

The FAD site is built by Gly17, Ala20, and Glu50. Positions 328 and 329 each coordinate chloride. Val330 contacts FAD.

Belongs to the flavin-dependent halogenase family.

The catalysed reaction is melleolide F + FADH2 + chloride + O2 = 6'-chloromelleolide F + FAD + 2 H2O + H(+). In terms of biological role, flavin-dependent halogenase involved in the biosynthesis of melleolides, a range of antifungal and phytotoxic polyketide derivatives composed of an orsellinic acid (OA) moiety esterified to various sesquiterpene alcohols. The halogenase catalyzes the transfer of a single chlorine atom to the melleolide backbone, resulting in a 6'-chloromelleolide product. The enzyme acts on free substrate and does not depend on carrier-protein-dependent acceptor molecules. This is Flavin-dependent halogenase armH5 from Armillaria mellea (Honey mushroom).